The primary structure comprises 673 residues: UvrABC system protein B (673 aa).

The Helicase ATP-binding domain occupies Glu26–Arg183. Gly39–Thr46 contacts ATP. Positions Tyr92–Val115 match the Beta-hairpin motif. The Helicase C-terminal domain occupies Gln431–Leu597. A UVR domain is found at Gln633–Leu668.

This sequence belongs to the UvrB family. As to quaternary structure, forms a heterotetramer with UvrA during the search for lesions. Interacts with UvrC in an incision complex.

The protein resides in the cytoplasm. In terms of biological role, the UvrABC repair system catalyzes the recognition and processing of DNA lesions. A damage recognition complex composed of 2 UvrA and 2 UvrB subunits scans DNA for abnormalities. Upon binding of the UvrA(2)B(2) complex to a putative damaged site, the DNA wraps around one UvrB monomer. DNA wrap is dependent on ATP binding by UvrB and probably causes local melting of the DNA helix, facilitating insertion of UvrB beta-hairpin between the DNA strands. Then UvrB probes one DNA strand for the presence of a lesion. If a lesion is found the UvrA subunits dissociate and the UvrB-DNA preincision complex is formed. This complex is subsequently bound by UvrC and the second UvrB is released. If no lesion is found, the DNA wraps around the other UvrB subunit that will check the other stand for damage. The sequence is that of UvrABC system protein B from Citrobacter koseri (strain ATCC BAA-895 / CDC 4225-83 / SGSC4696).